We begin with the raw amino-acid sequence, 337 residues long: B3 domain-containing protein REM16 (337 aa).

2 DNA-binding regions (TF-B3) span residues 22-116 (TLHF…FDGQ) and 223-321 (FLVF…FRGE).

Its subcellular location is the nucleus. This is B3 domain-containing protein REM16 (REM16) from Arabidopsis thaliana (Mouse-ear cress).